We begin with the raw amino-acid sequence, 179 residues long: ADP-ribosylation factor-like protein 5A (179 aa).

Glycine 2 is lipidated: N-myristoyl glycine. Residues 23–30, 66–70, 125–128, and alanine 159 each bind GTP; these read GLDNAGKT, DIGGQ, and NKQD.

This sequence belongs to the small GTPase superfamily. Arf family.

In terms of biological role, lacks ADP-ribosylation enhancing activity. The sequence is that of ADP-ribosylation factor-like protein 5A (ARL5A) from Homo sapiens (Human).